Here is a 206-residue protein sequence, read N- to C-terminus: Small ribosomal subunit protein uS4 (206 aa).

The S4 RNA-binding domain occupies 96-156 (CRLDNVVYRM…EKAKNQLRIV (61 aa)).

The protein belongs to the universal ribosomal protein uS4 family. As to quaternary structure, part of the 30S ribosomal subunit. Contacts protein S5. The interaction surface between S4 and S5 is involved in control of translational fidelity.

In terms of biological role, one of the primary rRNA binding proteins, it binds directly to 16S rRNA where it nucleates assembly of the body of the 30S subunit. With S5 and S12 plays an important role in translational accuracy. The sequence is that of Small ribosomal subunit protein uS4 from Pseudomonas fluorescens (strain ATCC BAA-477 / NRRL B-23932 / Pf-5).